Reading from the N-terminus, the 465-residue chain is UDP-N-acetylglucosamine 1-carboxyvinyltransferase (465 aa).

Residue 22–23 (KN) coordinates phosphoenolpyruvate. Arg-94 is a UDP-N-acetyl-alpha-D-glucosamine binding site. Cys-119 serves as the catalytic Proton donor. Residue Cys-119 is modified to 2-(S-cysteinyl)pyruvic acid O-phosphothioketal. UDP-N-acetyl-alpha-D-glucosamine contacts are provided by Asp-313 and Val-335.

This sequence belongs to the EPSP synthase family. MurA subfamily.

Its subcellular location is the cytoplasm. It catalyses the reaction phosphoenolpyruvate + UDP-N-acetyl-alpha-D-glucosamine = UDP-N-acetyl-3-O-(1-carboxyvinyl)-alpha-D-glucosamine + phosphate. It participates in cell wall biogenesis; peptidoglycan biosynthesis. In terms of biological role, cell wall formation. Adds enolpyruvyl to UDP-N-acetylglucosamine. In Protochlamydia amoebophila (strain UWE25), this protein is UDP-N-acetylglucosamine 1-carboxyvinyltransferase.